We begin with the raw amino-acid sequence, 136 residues long: Nucleoside diphosphate kinase (136 aa).

ATP is bound by residues lysine 10, phenylalanine 58, arginine 86, threonine 92, arginine 104, and asparagine 114. Histidine 117 serves as the catalytic Pros-phosphohistidine intermediate.

Belongs to the NDK family. Homotetramer. Mg(2+) is required as a cofactor.

It is found in the cytoplasm. The enzyme catalyses a 2'-deoxyribonucleoside 5'-diphosphate + ATP = a 2'-deoxyribonucleoside 5'-triphosphate + ADP. It catalyses the reaction a ribonucleoside 5'-diphosphate + ATP = a ribonucleoside 5'-triphosphate + ADP. Its function is as follows. Major role in the synthesis of nucleoside triphosphates other than ATP. The ATP gamma phosphate is transferred to the NDP beta phosphate via a ping-pong mechanism, using a phosphorylated active-site intermediate. The protein is Nucleoside diphosphate kinase of Corynebacterium glutamicum (strain R).